A 341-amino-acid chain; its full sequence is Elongation factor Ts (341 aa).

The involved in Mg(2+) ion dislocation from EF-Tu stretch occupies residues 80-83 (TDFV).

It belongs to the EF-Ts family.

The protein resides in the cytoplasm. Functionally, associates with the EF-Tu.GDP complex and induces the exchange of GDP to GTP. It remains bound to the aminoacyl-tRNA.EF-Tu.GTP complex up to the GTP hydrolysis stage on the ribosome. The polypeptide is Elongation factor Ts (Lactobacillus helveticus (strain DPC 4571)).